The primary structure comprises 347 residues: Ketol-acid reductoisomerase (NADP(+)) (347 aa).

Residues 1-185 enclose the KARI N-terminal Rossmann domain; that stretch reads MKIYYDEDAN…GGTRAGVLET (185 aa). Residues 24–27, arginine 47, serine 50, serine 52, and 82–85 each bind NADP(+); these read YGSQ and DEFQ. Histidine 107 is an active-site residue. Glycine 133 contributes to the NADP(+) binding site. Residues 186–336 form the KARI C-terminal knotted domain; it reads SFKEETETDL…AELRSKMKFL (151 aa). Mg(2+)-binding residues include aspartate 194, glutamate 198, glutamate 230, and glutamate 234. Serine 255 lines the substrate pocket.

Belongs to the ketol-acid reductoisomerase family. The cofactor is Mg(2+).

The catalysed reaction is (2R)-2,3-dihydroxy-3-methylbutanoate + NADP(+) = (2S)-2-acetolactate + NADPH + H(+). It carries out the reaction (2R,3R)-2,3-dihydroxy-3-methylpentanoate + NADP(+) = (S)-2-ethyl-2-hydroxy-3-oxobutanoate + NADPH + H(+). Its pathway is amino-acid biosynthesis; L-isoleucine biosynthesis; L-isoleucine from 2-oxobutanoate: step 2/4. It participates in amino-acid biosynthesis; L-valine biosynthesis; L-valine from pyruvate: step 2/4. Its function is as follows. Involved in the biosynthesis of branched-chain amino acids (BCAA). Catalyzes an alkyl-migration followed by a ketol-acid reduction of (S)-2-acetolactate (S2AL) to yield (R)-2,3-dihydroxy-isovalerate. In the isomerase reaction, S2AL is rearranged via a Mg-dependent methyl migration to produce 3-hydroxy-3-methyl-2-ketobutyrate (HMKB). In the reductase reaction, this 2-ketoacid undergoes a metal-dependent reduction by NADPH to yield (R)-2,3-dihydroxy-isovalerate. In Gamma-proteobacterium EBAC31A08, this protein is Ketol-acid reductoisomerase (NADP(+)).